Here is a 189-residue protein sequence, read N- to C-terminus: Phosphoheptose isomerase (189 aa).

In terms of domain architecture, SIS spans 34-189 (LVDALGNGKK…CDLLEKRLFG (156 aa)). 49-51 (NGG) provides a ligand contact to substrate. Residues histidine 58 and glutamate 62 each contribute to the Zn(2+) site. Residues glutamate 62, 91–92 (ND), 117–119 (STS), serine 122, and glutamine 169 each bind substrate. Residues glutamine 169 and histidine 177 each contribute to the Zn(2+) site.

This sequence belongs to the SIS family. GmhA subfamily. As to quaternary structure, homotetramer. Zn(2+) is required as a cofactor.

The protein localises to the cytoplasm. It catalyses the reaction 2 D-sedoheptulose 7-phosphate = D-glycero-alpha-D-manno-heptose 7-phosphate + D-glycero-beta-D-manno-heptose 7-phosphate. It functions in the pathway carbohydrate biosynthesis; D-glycero-D-manno-heptose 7-phosphate biosynthesis; D-glycero-alpha-D-manno-heptose 7-phosphate and D-glycero-beta-D-manno-heptose 7-phosphate from sedoheptulose 7-phosphate: step 1/1. Its function is as follows. Catalyzes the isomerization of sedoheptulose 7-phosphate in D-glycero-D-manno-heptose 7-phosphate. This chain is Phosphoheptose isomerase, found in Geotalea uraniireducens (strain Rf4) (Geobacter uraniireducens).